The chain runs to 260 residues: Activator of 90 kDa heat shock protein ATPase homolog 2 (260 aa).

The protein belongs to the AHA1 family.

In terms of biological role, co-chaperone that stimulates HSP90 ATPase activity. This chain is Activator of 90 kDa heat shock protein ATPase homolog 2 (AHSA2), found in Bos taurus (Bovine).